The chain runs to 141 residues: Large ribosomal subunit protein bL17 (141 aa).

It belongs to the bacterial ribosomal protein bL17 family. In terms of assembly, part of the 50S ribosomal subunit. Contacts protein L32.

The sequence is that of Large ribosomal subunit protein bL17 from Agrobacterium fabrum (strain C58 / ATCC 33970) (Agrobacterium tumefaciens (strain C58)).